A 264-amino-acid chain; its full sequence is Small ribosomal subunit protein uS2 (264 aa).

The protein belongs to the universal ribosomal protein uS2 family.

The polypeptide is Small ribosomal subunit protein uS2 (Helicobacter pylori (strain Shi470)).